We begin with the raw amino-acid sequence, 861 residues long: Bifunctional uridylyltransferase/uridylyl-removing enzyme (861 aa).

The interval M1 to R321 is uridylyltransferase. The interval L322–T678 is uridylyl-removing. Residues V440–L562 enclose the HD domain. ACT domains follow at residues E679–R760 and Q788–Y861.

Belongs to the GlnD family. Mg(2+) serves as cofactor.

It carries out the reaction [protein-PII]-L-tyrosine + UTP = [protein-PII]-uridylyl-L-tyrosine + diphosphate. The catalysed reaction is [protein-PII]-uridylyl-L-tyrosine + H2O = [protein-PII]-L-tyrosine + UMP + H(+). Its activity is regulated as follows. Uridylyltransferase (UTase) activity is inhibited by glutamine, while glutamine activates uridylyl-removing (UR) activity. In terms of biological role, modifies, by uridylylation and deuridylylation, the PII regulatory proteins (GlnB and homologs), in response to the nitrogen status of the cell that GlnD senses through the glutamine level. Under low glutamine levels, catalyzes the conversion of the PII proteins and UTP to PII-UMP and PPi, while under higher glutamine levels, GlnD hydrolyzes PII-UMP to PII and UMP (deuridylylation). Thus, controls uridylylation state and activity of the PII proteins, and plays an important role in the regulation of nitrogen assimilation and metabolism. The protein is Bifunctional uridylyltransferase/uridylyl-removing enzyme of Legionella pneumophila (strain Paris).